Reading from the N-terminus, the 56-residue chain is Sperm protamine P1 (56 aa).

The tract at residues 1-56 (RLSRRRVYSIGGRRRRRRRRSRGRRGRRRGRRRGRRRGRRRGRRRRRRRGGRRRRR) is disordered.

In terms of processing, P2 is phosphorylated in immature sperm. It is dephosphorylated in mature sperm allowing a stronger interaction with DNA. As to expression, testis.

It localises to the nucleus. The protein localises to the chromosome. In terms of biological role, protamines substitute for histones in the chromatin of sperm during the haploid phase of spermatogenesis. They compact sperm DNA into a highly condensed, stable and inactive complex. Its function is as follows. Octopus spermiogenesis is characterized by a double nuclear protein transition: Histones are first replaced by P1, which allows the chromatin to adopt a shape that is not as relaxed as with histones. The majority of P1 is later replaced by P2, forming a compact chromatin. P2 is the main protamine of sperm. This chain is Sperm protamine P1, found in Octopus vulgaris (Common octopus).